The sequence spans 73 residues: Antitoxin VapB20 (73 aa).

Functionally, antitoxin component of a type II toxin-antitoxin (TA) system. Upon expression in E.coli neutralizes the toxic effect of cognate toxin VapC20. The protein is Antitoxin VapB20 (vapB20) of Mycobacterium tuberculosis (strain ATCC 25618 / H37Rv).